A 572-amino-acid chain; its full sequence is MGTCLKGNMSVLSLVLFLLSVQQFWAQEDPLLPFSEHLDLEHNVQLKWGFDKIQGTILFQLSVNTSGWISFGLSPNGGMTGADIVIGGVDNKGTYFTDRHALGNSMPVVDQKQNYKLLSLSESDGKTVMKFQRSIESCDENDLPVTILPMKLIYAYGETDDISYHKAQRGTKEVNLLKYMPRASLSNATYFDITMENFMLPANQTYYHCKTARAPTFDSKQHIYRIEPVITNYDLVHHLLLYRCPPTVTEPLELECYTKTERCMETIAVWGVGGGDFEFPEVAGLPIGGNVGDFFYRLEVHYNNVNKTAGRVDSSGLRFYYTSKLRQHDAGILMTGLAVIPSYAIPPKAKSFLTYGMCDTTYIPKVLETANDLQVFSVMMHTHLAGRKVRVGHFREGKQIDLLAVDENYNFEFQQVTNLGKTKTVKLGDKLLVECTYNTENRNTLTQGGLSTSDEMCLAFLFYYPAMNLSGCESLPHFSSLVSEMGAGDTGTWLYMMNTMAWNDSSINEYQQTLKKINQTVIVVNSFNKASITNGTIPDLKVSPPEPCVRACATKNLAFMSLFLCLAGMWAS.

Residues 1 to 26 (MGTCLKGNMSVLSLVLFLLSVQQFWA) form the signal peptide. N-linked (GlcNAc...) asparagine glycans are attached at residues asparagine 8, asparagine 64, asparagine 187, and asparagine 203. The Extracellular segment spans residues 27–552 (QEDPLLPFSE…SPPEPCVRAC (526 aa)). One can recognise a DOMON domain in the interval 42–157 (HNVQLKWGFD…LPMKLIYAYG (116 aa)). The active site involves tyrosine 207. 2 disulfide bridges follow: cysteine 209/cysteine 256 and cysteine 244/cysteine 263. Histidine 237 and histidine 238 together coordinate Cu cation. Position 301 (histidine 301) interacts with Cu cation. A glycan (N-linked (GlcNAc...) asparagine) is linked at asparagine 306. 2 disulfide bridges follow: cysteine 358–cysteine 472 and cysteine 435–cysteine 457. Histidine 381 is a catalytic residue. Residues histidine 381, histidine 383, and methionine 456 each contribute to the Cu cation site. N-linked (GlcNAc...) asparagine glycans are attached at residues asparagine 468, asparagine 503, asparagine 518, and asparagine 534. Residues 553–571 (ATKNLAFMSLFLCLAGMWA) traverse the membrane as a helical segment. Serine 572 is a topological domain (cytoplasmic).

It belongs to the copper type II ascorbate-dependent monooxygenase family. It depends on Cu(2+) as a cofactor.

The protein resides in the membrane. The protein is DBH-like monooxygenase protein 2 homolog (moxd2) of Danio rerio (Zebrafish).